The following is a 412-amino-acid chain: Multifunctional CCA protein (412 aa).

The ATP site is built by glycine 8 and arginine 11. Residues glycine 8 and arginine 11 each coordinate CTP. Residues aspartate 21 and aspartate 23 each contribute to the Mg(2+) site. The ATP site is built by arginine 91, arginine 137, and arginine 140. CTP contacts are provided by arginine 91, arginine 137, and arginine 140. Residues 228-329 (TGIHTLMTLS…VKLFDSIDAW (102 aa)) enclose the HD domain.

Belongs to the tRNA nucleotidyltransferase/poly(A) polymerase family. Bacterial CCA-adding enzyme type 1 subfamily. In terms of assembly, monomer. Can also form homodimers and oligomers. It depends on Mg(2+) as a cofactor. Requires Ni(2+) as cofactor.

It catalyses the reaction a tRNA precursor + 2 CTP + ATP = a tRNA with a 3' CCA end + 3 diphosphate. It carries out the reaction a tRNA with a 3' CCA end + 2 CTP + ATP = a tRNA with a 3' CCACCA end + 3 diphosphate. Its function is as follows. Catalyzes the addition and repair of the essential 3'-terminal CCA sequence in tRNAs without using a nucleic acid template. Adds these three nucleotides in the order of C, C, and A to the tRNA nucleotide-73, using CTP and ATP as substrates and producing inorganic pyrophosphate. tRNA 3'-terminal CCA addition is required both for tRNA processing and repair. Also involved in tRNA surveillance by mediating tandem CCA addition to generate a CCACCA at the 3' terminus of unstable tRNAs. While stable tRNAs receive only 3'-terminal CCA, unstable tRNAs are marked with CCACCA and rapidly degraded. In Escherichia coli O81 (strain ED1a), this protein is Multifunctional CCA protein.